We begin with the raw amino-acid sequence, 225 residues long: Urease accessory protein UreF (225 aa).

The protein belongs to the UreF family. In terms of assembly, ureD, UreF and UreG form a complex that acts as a GTP-hydrolysis-dependent molecular chaperone, activating the urease apoprotein by helping to assemble the nickel containing metallocenter of UreC. The UreE protein probably delivers the nickel.

It localises to the cytoplasm. In terms of biological role, required for maturation of urease via the functional incorporation of the urease nickel metallocenter. In Picosynechococcus sp. (strain ATCC 27264 / PCC 7002 / PR-6) (Agmenellum quadruplicatum), this protein is Urease accessory protein UreF.